Here is a 312-residue protein sequence, read N- to C-terminus: DNA primase small subunit PriS (312 aa).

Catalysis depends on residues D88, D90, and D215.

This sequence belongs to the eukaryotic-type primase small subunit family. As to quaternary structure, heterodimer of a small subunit (PriS) and a large subunit (PriL). Requires Mg(2+) as cofactor. The cofactor is Mn(2+).

Catalytic subunit of DNA primase, an RNA polymerase that catalyzes the synthesis of short RNA molecules used as primers for DNA polymerase during DNA replication. The small subunit contains the primase catalytic core and has DNA synthesis activity on its own. Binding to the large subunit stabilizes and modulates the activity, increasing the rate of DNA synthesis while decreasing the length of the DNA fragments, and conferring RNA synthesis capability. The DNA polymerase activity may enable DNA primase to also catalyze primer extension after primer synthesis. May also play a role in DNA repair. The polypeptide is DNA primase small subunit PriS (Pyrobaculum islandicum (strain DSM 4184 / JCM 9189 / GEO3)).